The sequence spans 347 residues: MNPLAQPIIYSTIFAGTFITVLSSHWFFTWVGLEMNMLAFIPVLTKKMSPRSTEAAIKYFLTQATASMILLMAILSNNMLSGQWTMTNTTNQYSSLMIMTAMAMKLGMAPFHFWVPEVTQGTPLMSGLLLLTWQKLAPISIMYQMSSSLNVNLLLTLSILSIMAGSWGGLNQTQLRKILAYSSITHMGWMMAVLPYNPNMTILNLTIYIILTTTTFLLLNLNSSTTTLLLSRTWNKLTWLTPLIPSTLLSLGGLPPLTGFLPKWVIIEEFTKNNSLIIPTTMAIITLLNLYFYLRLIYSTSITLLPMSNNVKMKWQFEHTKPTPFLPTLITLTTLLLPISPFMLMIL.

10 consecutive transmembrane segments (helical) span residues 13 to 33 (IFAG…WVGL), 55 to 75 (AAIK…MAIL), 96 to 116 (LMIM…FWVP), 123 to 143 (PLMS…SIMY), 149 to 169 (LNVN…SWGG), 178 to 198 (ILAY…PYNP), 201 to 221 (TILN…LLNL), 247 to 267 (TLLS…WVII), 274 to 294 (NSLI…YFYL), and 326 to 346 (LPTL…MLMI).

Belongs to the complex I subunit 2 family. As to quaternary structure, core subunit of respiratory chain NADH dehydrogenase (Complex I) which is composed of 45 different subunits. Interacts with TMEM242.

The protein resides in the mitochondrion inner membrane. The catalysed reaction is a ubiquinone + NADH + 5 H(+)(in) = a ubiquinol + NAD(+) + 4 H(+)(out). Core subunit of the mitochondrial membrane respiratory chain NADH dehydrogenase (Complex I) which catalyzes electron transfer from NADH through the respiratory chain, using ubiquinone as an electron acceptor. Essential for the catalytic activity and assembly of complex I. This is NADH-ubiquinone oxidoreductase chain 2 from Pan paniscus (Pygmy chimpanzee).